The following is a 459-amino-acid chain: Autophagy-related protein 18 (459 aa).

2 WD repeats span residues methionine 1 to serine 39 and alanine 188 to glutamine 228. Residues phenylalanine 229–glycine 232 are necessary for proper localization to vacuole membrane. Residues phenylalanine 229–threonine 233 carry the L/FRRG motif motif. Residues threonine 233 to threonine 272 form a WD 3 repeat. Residues leucine 264–leucine 339 form a disordered region. The span at glycine 265–proline 277 shows a compositional bias: low complexity. Positions arginine 285 to aspartate 296 are enriched in basic and acidic residues. Positions proline 319–arginine 330 are enriched in gly residues. The WD 4 repeat unit spans residues alanine 393–glycine 433.

The protein belongs to the WD repeat PROPPIN family. As to quaternary structure, component of the PI(3,5)P2 regulatory complex. Interacts with ATG2 and ATG9. The ATG2-ATG18 complex is essential for autophagosome formation.

It localises to the preautophagosomal structure membrane. Its subcellular location is the vacuole membrane. The protein localises to the endosome membrane. Component of the PI(3,5)P2 regulatory complex that regulates both the synthesis and turnover of phosphatidylinositol 3,5-bisphosphate (PtdIns(3,5)P2). Plays an important role in osmotically-induced vacuole fragmentation. Required for cytoplasm to vacuole transport (Cvt) vesicle formation, pexophagy and starvation-induced autophagy. Involved in correct ATG9 trafficking to the pre-autophagosomal structure. With ATG2, protects ATG8 from ATG4-mediated cleavage. Autophagy is required for proper vegetative growth, asexual/sexual reproduction, and full virulence. Autophagy is particularly involved in the biosynthesis of deoxynivalenol (DON), an important virulence determinant. The chain is Autophagy-related protein 18 from Gibberella zeae (strain ATCC MYA-4620 / CBS 123657 / FGSC 9075 / NRRL 31084 / PH-1) (Wheat head blight fungus).